The sequence spans 69 residues: MSQPMTVQCPTCDAPVEWSAASPSRPFCSERCKLIDLGAWASEEHAIPVSPDAEDELFSGDLEAPHRGH.

The Zn(2+) site is built by Cys-9, Cys-12, Cys-28, and Cys-32. The tract at residues 48 to 69 is disordered; the sequence is PVSPDAEDELFSGDLEAPHRGH.

This sequence belongs to the DNA gyrase inhibitor YacG family. Interacts with GyrB. Zn(2+) is required as a cofactor.

Functionally, inhibits all the catalytic activities of DNA gyrase by preventing its interaction with DNA. Acts by binding directly to the C-terminal domain of GyrB, which probably disrupts DNA binding by the gyrase. The sequence is that of DNA gyrase inhibitor YacG from Pseudomonas syringae pv. syringae (strain B728a).